The sequence spans 193 residues: Nucleoside triphosphate pyrophosphatase (193 aa).

The active-site Proton acceptor is the Asp-70.

Belongs to the Maf family. It depends on a divalent metal cation as a cofactor.

The protein localises to the cytoplasm. It catalyses the reaction a ribonucleoside 5'-triphosphate + H2O = a ribonucleoside 5'-phosphate + diphosphate + H(+). It carries out the reaction a 2'-deoxyribonucleoside 5'-triphosphate + H2O = a 2'-deoxyribonucleoside 5'-phosphate + diphosphate + H(+). Its function is as follows. Nucleoside triphosphate pyrophosphatase. May have a dual role in cell division arrest and in preventing the incorporation of modified nucleotides into cellular nucleic acids. In Anaplasma phagocytophilum (strain HZ), this protein is Nucleoside triphosphate pyrophosphatase.